A 360-amino-acid polypeptide reads, in one-letter code: Phospho-N-acetylmuramoyl-pentapeptide-transferase (360 aa).

10 helical membrane passes run 21–41 (YLTL…FIVG), 70–90 (GTPT…TLLW), 97–117 (YVWA…VDDY), 134–154 (YLWQ…TASS), 168–188 (VVLN…VGSS), 199–219 (GLAI…AYAS), 236–256 (AGEL…FLWF), 263–283 (VFMG…VAVL), 288–308 (IVLM…MLQV), and 338–358 (VIVR…ATLK).

The protein belongs to the glycosyltransferase 4 family. MraY subfamily. It depends on Mg(2+) as a cofactor.

Its subcellular location is the cell inner membrane. It catalyses the reaction UDP-N-acetyl-alpha-D-muramoyl-L-alanyl-gamma-D-glutamyl-meso-2,6-diaminopimeloyl-D-alanyl-D-alanine + di-trans,octa-cis-undecaprenyl phosphate = di-trans,octa-cis-undecaprenyl diphospho-N-acetyl-alpha-D-muramoyl-L-alanyl-D-glutamyl-meso-2,6-diaminopimeloyl-D-alanyl-D-alanine + UMP. The protein operates within cell wall biogenesis; peptidoglycan biosynthesis. Catalyzes the initial step of the lipid cycle reactions in the biosynthesis of the cell wall peptidoglycan: transfers peptidoglycan precursor phospho-MurNAc-pentapeptide from UDP-MurNAc-pentapeptide onto the lipid carrier undecaprenyl phosphate, yielding undecaprenyl-pyrophosphoryl-MurNAc-pentapeptide, known as lipid I. The chain is Phospho-N-acetylmuramoyl-pentapeptide-transferase from Methylococcus capsulatus (strain ATCC 33009 / NCIMB 11132 / Bath).